Here is a 422-residue protein sequence, read N- to C-terminus: Cytochrome P-450 monooxygenase DoxA (422 aa).

A heme-binding site is contributed by C369.

Belongs to the cytochrome P450 family. As to quaternary structure, monomer. It depends on heme as a cofactor.

The protein localises to the cytoplasm. It catalyses the reaction 13-deoxydaunorubicin + NADPH + O2 + H(+) = 13-dihydrodaunorubicin + NADP(+) + H2O. It carries out the reaction 13-dihydrodaunorubicin + NADPH + O2 + H(+) = daunorubicin + NADP(+) + 2 H2O. The enzyme catalyses 13-deoxycarminomycin + NADPH + O2 + H(+) = 13-dihydrocarminomycin + NADP(+) + H2O. The catalysed reaction is 13-dihydrocarminomycin + NADPH + O2 + H(+) = carminomycin + NADP(+) + 2 H2O. Its pathway is antibiotic biosynthesis; daunorubicin biosynthesis. The protein operates within antibiotic biosynthesis; carminomycin biosynthesis. With respect to regulation, strongly inhibited by dithiothreitol and high ionic strength buffers. Functionally, involved in the biosynthesis of the anthracyclines carminomycin and daunorubicin (daunomycin) which are aromatic polyketide antibiotics that exhibit high cytotoxicity and are widely applied in the chemotherapy of a variety of cancers. In vivo, DoxA catalyzes the C-13 hydroxylation of 13-deoxycarminomycin and 13-deoxydaunorubicin to yield 13-dihydrocarminomycin and 13-dihydrodaunorubicin, respectively, as well as the oxidation of these 13-dihydro-anthracyclines to their respective 13-keto forms, carminomycin and daunorubicin. In vitro, it also catalyzes the C-14 hydroxylation of daunorubicin to form doxorubicin (adriamycin), although this strain is not a doxorubicin producer. It is not able to accept anthracyclinones (aglycones) and anthracyclines with a 10-carbomethoxyl moiety. 13-oxidation of the anthracyclines possessing the 4-methoxy substitution is greatly favored. The anthracycline analog desacetyladriamycin can be oxidized to 10-hydroxydesacetyladriamycin. It can only use NADP. DoxA acts jointly with DauV. The chain is Cytochrome P-450 monooxygenase DoxA (doxA) from Streptomyces sp. (strain C5).